Here is a 354-residue protein sequence, read N- to C-terminus: Neutral protease 2 homolog MEP3 (354 aa).

A signal peptide spans 1–19 (MHFTSSLLALVALTTQALA). Residues 20-179 (FPLNDLPKRD…QSAIPKLEKR (160 aa)) constitute a propeptide that is removed on maturation. Disulfide bonds link C186/C256 and C263/C281. H305 contacts Zn(2+). The active site involves E306. Zn(2+) is bound by residues H309 and D320.

The protein belongs to the peptidase M35 family. It depends on Zn(2+) as a cofactor.

Its subcellular location is the secreted. It catalyses the reaction Preferential cleavage of bonds with hydrophobic residues in P1'. Also 3-Asn-|-Gln-4 and 8-Gly-|-Ser-9 bonds in insulin B chain.. Secreted metalloproteinase that allows assimilation of proteinaceous substrates. Shows high activities on basic nuclear substrates such as histone and protamine. May be involved in virulence. This is Neutral protease 2 homolog MEP3 (MEP3) from Coccidioides posadasii (strain C735) (Valley fever fungus).